A 423-amino-acid polypeptide reads, in one-letter code: Ribosome biogenesis protein WDR12 homolog (423 aa).

The segment at 10–93 is ubiquitin-like (UBL) domain; sequence VQVHLKTKQE…EDAIEIEYVE (84 aa). 7 WD repeats span residues 105–142, 144–186, 193–232, 253–291, 293–332, 338–378, and 382–420; these read LHDDWVSAVKVSGKWILTGCYDNTLNIWTHKGKHILTI, GHTA…NAVE, GHERGVDSISVSPDATRFATGSWDTMLKVWSAAEDDAGGD, GHRESISAVQWIDTSTLLTTSWDHTMKIWDLSLEGIKTE, STNKSIFDASYSNLNRLIVTASADKNLRLYDPRTNQGSIV, GHNA…APLY, and GHGEKVLDIDWSNPKYICSGGADNTVRVFKSRKAGVETM.

The protein belongs to the WD repeat WDR12/YTM1 family.

The protein resides in the nucleus. It is found in the nucleolus. Its subcellular location is the nucleoplasm. Functionally, required for maturation of ribosomal RNAs and formation of the large ribosomal subunit. The polypeptide is Ribosome biogenesis protein WDR12 homolog (Drosophila willistoni (Fruit fly)).